We begin with the raw amino-acid sequence, 1157 residues long: Voltage-dependent calcium channel subunit alpha-2/delta-2 (1157 aa).

The first 18 residues, 1-18 (MAVPARTCGASWPGPVRT), serve as a signal peptide directing secretion. The disordered stretch occupies residues 1-37 (MAVPARTCGASWPGPVRTARPWPGRGPRPCPDPRGPA). Topologically, residues 19–1119 (ARPWPGRGPR…TEDTSDCGRG (1101 aa)) are extracellular. Positions 24–34 (GRGPRPCPDPR) are enriched in pro residues. N-linked (GlcNAc...) asparagine glycosylation is present at N205. Residues 294-472 (DMVIIVDVSG…INTQEYLDVL (179 aa)) enclose the VWFA domain. 3 residues coordinate a divalent metal cation: D300, S302, and S304. The MIDAS-like motif signature appears at 300–304 (DVSGS). N389, N421, N510, N543, N627, and N864 each carry an N-linked (GlcNAc...) asparagine glycan. A disulfide bridge connects residues C446 and C1104. In terms of domain architecture, Cache spans 488–577 (WTNVYEDALG…KPQITNFREP (90 aa)). Residues 1120–1140 (ASFPPSLGVLVSLQLLLLLGL) traverse the membrane as a helical segment. The Cytoplasmic portion of the chain corresponds to 1141 to 1157 (PPRPQPQIHSFTPSRRL).

It belongs to the calcium channel subunit alpha-2/delta family. Dimer formed of alpha-2-2 and delta-2 chains; disulfide-linked. Voltage-dependent calcium channels are multisubunit complexes, consisting of alpha-1 (CACNA1), alpha-2 (CACNA2D), beta (CACNB) and delta (CACNA2D) subunits in a 1:1:1:1 ratio. N-glycosylated. In terms of processing, may be proteolytically processed into subunits alpha-2-2 and delta-2 that are disulfide-linked. It is however unclear whether such cleavage really takes place in vivo and has a functional role. As to expression, in heart, it is highly expressed in atrium and at lower level in ventricle.

Its subcellular location is the membrane. Its function is as follows. The alpha-2/delta subunit of voltage-dependent calcium channels regulates calcium current density and activation/inactivation kinetics of the calcium channel. Acts as a regulatory subunit for P/Q-type calcium channel (CACNA1A), N-type (CACNA1B), L-type (CACNA1C OR CACNA1D) and possibly T-type (CACNA1G). Overexpression induces apoptosis. This Rattus norvegicus (Rat) protein is Voltage-dependent calcium channel subunit alpha-2/delta-2 (Cacna2d2).